A 787-amino-acid polypeptide reads, in one-letter code: ATP-dependent RNA helicase dbp4 (787 aa).

The disordered stretch occupies residues 1–28 (MAPAAGPRTGKHAKPQRSKTLKRKRGQE). Positions 9 to 25 (TGKHAKPQRSKTLKRKR) are enriched in basic residues. The Q motif signature appears at 47 to 75 (KSFSDLPLSEPTASGLASSHYKTLTDIQS). A Helicase ATP-binding domain is found at 78–252 (ISHALKGRDI…RLSLQDPEYV (175 aa)). 91-98 (AKTGSGKT) contributes to the ATP binding site. Residues 200 to 203 (DEAD) carry the DEAD box motif. In terms of domain architecture, Helicase C-terminal spans 278 to 437 (KLDILWSFIR…SIKDQLQNMC (160 aa)). 4 disordered regions span residues 494 to 542 (GDDT…DRMF), 560 to 579 (DDGTMVAPNAGAGADADEDD), 586 to 618 (RRFDAGDKDLGSSGDEDDESEKGNKKNVKVRRE), and 653 to 776 (DEEQ…QTLE). Basic and acidic residues predominate over residues 522–542 (GEKKSKKKEEPQVRTKYDRMF). Composition is skewed to basic and acidic residues over residues 586 to 595 (RRFDAGDKDL) and 656 to 690 (QFKARGDAKDQQAKFLAEEAERTRLADMEDKEIAK). Residues 691-700 (QKRREKKEKR) show a composition bias toward basic residues. Basic and acidic residues predominate over residues 741 to 755 (KFTEANDREEAEPWY).

The protein belongs to the DEAD box helicase family. DDX10/DBP4 subfamily. In terms of assembly, interacts with the U3 and U14 snoRNAs. Associates with pre-ribosomal complexes.

It localises to the nucleus. It is found in the nucleolus. It catalyses the reaction ATP + H2O = ADP + phosphate + H(+). In terms of biological role, ATP-dependent RNA helicase required for ribosome biogenesis. Involved in the release of U14 snoRNA in pre-ribosomal complexes. Required for pre-rRNA cleavage at site A2. This Aspergillus fumigatus (strain ATCC MYA-4609 / CBS 101355 / FGSC A1100 / Af293) (Neosartorya fumigata) protein is ATP-dependent RNA helicase dbp4 (dbp4).